The sequence spans 2381 residues: Protein Ycf2 (2381 aa).

Residue 1655 to 1662 (GPMETGRS) coordinates ATP.

This sequence belongs to the Ycf2 family.

It is found in the plastid. Its subcellular location is the chloroplast stroma. In terms of biological role, probable ATPase of unknown function. Its presence in a non-photosynthetic plant (Epifagus virginiana) and experiments in tobacco indicate that it has an essential function which is probably not related to photosynthesis. The polypeptide is Protein Ycf2 (Angiopteris evecta (Mule's foot fern)).